A 319-amino-acid polypeptide reads, in one-letter code: Acetyl-coenzyme A carboxylase carboxyl transferase subunit alpha (319 aa).

The CoA carboxyltransferase C-terminal domain maps to 35–296; the sequence is NLDEEVQRLR…KAQLLADLND (262 aa).

Belongs to the AccA family. Acetyl-CoA carboxylase is a heterohexamer composed of biotin carboxyl carrier protein (AccB), biotin carboxylase (AccC) and two subunits each of ACCase subunit alpha (AccA) and ACCase subunit beta (AccD).

The protein resides in the cytoplasm. It carries out the reaction N(6)-carboxybiotinyl-L-lysyl-[protein] + acetyl-CoA = N(6)-biotinyl-L-lysyl-[protein] + malonyl-CoA. It functions in the pathway lipid metabolism; malonyl-CoA biosynthesis; malonyl-CoA from acetyl-CoA: step 1/1. Functionally, component of the acetyl coenzyme A carboxylase (ACC) complex. First, biotin carboxylase catalyzes the carboxylation of biotin on its carrier protein (BCCP) and then the CO(2) group is transferred by the carboxyltransferase to acetyl-CoA to form malonyl-CoA. The protein is Acetyl-coenzyme A carboxylase carboxyl transferase subunit alpha of Yersinia pseudotuberculosis serotype O:3 (strain YPIII).